A 379-amino-acid polypeptide reads, in one-letter code: Chaperone protein DnaJ (379 aa).

One can recognise a J domain in the interval 5–70; that stretch reads DYYETLGCDR…QKRAAYDRFG (66 aa). The CR-type zinc finger occupies 134–212; it reads GKTAQIKIPT…CGGAGRVTRE (79 aa). Residues Cys147, Cys150, Cys164, Cys167, Cys186, Cys189, Cys200, and Cys203 each coordinate Zn(2+). CXXCXGXG motif repeat units follow at residues 147–154, 164–171, 186–193, and 200–207; these read CETCSGTG, CRMCGGAG, CPNCQGRG, and CSDCGGAG.

It belongs to the DnaJ family. Homodimer. Zn(2+) is required as a cofactor.

It is found in the cytoplasm. In terms of biological role, participates actively in the response to hyperosmotic and heat shock by preventing the aggregation of stress-denatured proteins and by disaggregating proteins, also in an autonomous, DnaK-independent fashion. Unfolded proteins bind initially to DnaJ; upon interaction with the DnaJ-bound protein, DnaK hydrolyzes its bound ATP, resulting in the formation of a stable complex. GrpE releases ADP from DnaK; ATP binding to DnaK triggers the release of the substrate protein, thus completing the reaction cycle. Several rounds of ATP-dependent interactions between DnaJ, DnaK and GrpE are required for fully efficient folding. Also involved, together with DnaK and GrpE, in the DNA replication of plasmids through activation of initiation proteins. The protein is Chaperone protein DnaJ of Xanthobacter autotrophicus (strain ATCC BAA-1158 / Py2).